Consider the following 681-residue polypeptide: Transmembrane protein 168-A (681 aa).

Helical transmembrane passes span 16-36, 47-67, 73-93, 135-155, 156-176, 184-204, 252-272, 281-301, and 346-365; these read FLRC…CLGM, MILV…ILYY, SASL…LCFL, PVVI…ASIS, LVFD…ALII, LALP…FQSL, FSLF…AFKL, VIPG…VFLV, and LVLF…WQVA. A glycan (N-linked (GlcNAc...) asparagine) is linked at Asn-517.

The protein belongs to the TMEM168 family.

The protein resides in the nucleus membrane. Its function is as follows. Plays a key role in maintaining the cardiac electrical stability by modulating cell surface expression of SCN5A. The protein is Transmembrane protein 168-A (tmem168a) of Danio rerio (Zebrafish).